The sequence spans 498 residues: Calcitonin receptor (498 aa).

The first 29 residues, 1–29, serve as a signal peptide directing secretion; the sequence is MRFTLTRWCLTLFIFLNRPLPVLPDSADG. Topologically, residues 30-147 are extracellular; sequence AHTPTLEPEP…FTPDKLQNAY (118 aa). Intrachain disulfides connect cysteine 56-cysteine 82, cysteine 73-cysteine 113, and cysteine 96-cysteine 135. 3 N-linked (GlcNAc...) asparagine glycosylation sites follow: asparagine 74, asparagine 126, and asparagine 131. Residues 148 to 170 traverse the membrane as a helical segment; the sequence is ILYYLAIVGHSLSILTLLISLGI. Residues 171–198 are Cytoplasmic-facing; that stretch reads FMFLRYFNLLAPFNALLYPTRSISCQRV. The helical transmembrane segment at 199–219 threads the bilayer; the sequence is TLHKNMFLTYVLNSIIIIVHL. At 220–236 the chain is on the extracellular side; it reads VVIVPNGELVKRDPPIC. A disulfide bridge links cysteine 236 with cysteine 306. The helical transmembrane segment at 237–259 threads the bilayer; sequence KVLHFFHQYMMSCNYFWMLCEGV. Over 260–276 the chain is Cytoplasmic; sequence YLHTLIVVSVFAEGQRL. A helical transmembrane segment spans residues 277–297; the sequence is WWYHVLGWGFPLIPTTAHAIT. The Extracellular segment spans residues 298-313; sequence RAVLFNDNCWLSVDTN. A helical transmembrane segment spans residues 314–337; that stretch reads LLYIIHGPVMAALVVNFFFLLNIL. Topologically, residues 338–357 are cytoplasmic; it reads RVLVKKLKESQEAESHMYLK. Residues 358-376 traverse the membrane as a helical segment; it reads AVRATLILVPLLGVQFVVL. Residues 377–384 are Extracellular-facing; the sequence is PWRPSTPL. A helical transmembrane segment spans residues 385–411; the sequence is LGKIYDYVVHSLIHFQGFFVAIIYCFC. The Cytoplasmic segment spans residues 412-498; sequence NHEVQGALKR…MEVLEQETSA (87 aa).

This sequence belongs to the G-protein coupled receptor 2 family. Heterodimer of CALCR and RAMP1, RAMP2 or RAMP3; the receptor complexes function as AMYR1, AMYR2 and AMYR3 receptors, respectively, and respond to amylin/IAPP, calcitonin/CT and CGRP1 ligands. Interacts with GPRASP2.

It localises to the cell membrane. In terms of biological role, g protein-coupled receptor activated by ligand peptides amylin (IAPP), calcitonin (CT/CALCA) and calcitonin gene-related peptide type 1 (CGRP1/CALCA). CALCR interacts with receptor-activity-modifying proteins RAMP1, 2 and 3 to form receptor complexes AMYR1, 2 and 3, respectively. IAPP, CT and CGRP1 activate CALCR and AMYRs with distinct modes of receptor activation resulting in specific phenotypes. Ligand binding causes a conformation change that triggers signaling via guanine nucleotide-binding proteins (G proteins) and modulates the activity of downstream effectors. Activates cAMP-dependent pathway. This Sus scrofa (Pig) protein is Calcitonin receptor.